The following is a 644-amino-acid chain: Biosynthetic arginine decarboxylase (644 aa).

The residue at position 113 (Lys-113) is an N6-(pyridoxal phosphate)lysine. 293–303 (FDVGGGLGVDY) is a substrate binding site.

It belongs to the Orn/Lys/Arg decarboxylase class-II family. SpeA subfamily. Requires Mg(2+) as cofactor. The cofactor is pyridoxal 5'-phosphate.

It catalyses the reaction L-arginine + H(+) = agmatine + CO2. Functionally, catalyzes the biosynthesis of agmatine from arginine. The polypeptide is Biosynthetic arginine decarboxylase (Pasteurella multocida (strain Pm70)).